The sequence spans 327 residues: Phenylalanine--tRNA ligase alpha subunit (327 aa).

Glu252 serves as a coordination point for Mg(2+).

It belongs to the class-II aminoacyl-tRNA synthetase family. Phe-tRNA synthetase alpha subunit type 1 subfamily. In terms of assembly, tetramer of two alpha and two beta subunits. Requires Mg(2+) as cofactor.

Its subcellular location is the cytoplasm. The catalysed reaction is tRNA(Phe) + L-phenylalanine + ATP = L-phenylalanyl-tRNA(Phe) + AMP + diphosphate + H(+). The sequence is that of Phenylalanine--tRNA ligase alpha subunit from Shewanella baltica (strain OS223).